The chain runs to 205 residues: MSKRIQAKHKLDRRMGQNIWGRPKSPVNRREYGPGQHGQRRKGKLSDFGTQLRAKQKLKGYYANITEKQFRRYYAEAIRLRGDSGENLIGLLERRLDAVIYRAKFVATPFAARQFVNHGHIKVNGQRVNIPSFLVKPGDVIEVKESSKQLEIVVVASQLAERDVPDYIEVDHGKMTARFTRVPTLSEVPYPVHMEPNQVIEFYSR.

Positions 1–12 (MSKRIQAKHKLD) are enriched in basic residues. The interval 1-49 (MSKRIQAKHKLDRRMGQNIWGRPKSPVNRREYGPGQHGQRRKGKLSDFG) is disordered. Positions 94-156 (RRLDAVIYRA…SKQLEIVVVA (63 aa)) constitute an S4 RNA-binding domain.

The protein belongs to the universal ribosomal protein uS4 family. As to quaternary structure, part of the 30S ribosomal subunit. Contacts protein S5. The interaction surface between S4 and S5 is involved in control of translational fidelity.

Its function is as follows. One of the primary rRNA binding proteins, it binds directly to 16S rRNA where it nucleates assembly of the body of the 30S subunit. With S5 and S12 plays an important role in translational accuracy. The chain is Small ribosomal subunit protein uS4 from Methylobacterium nodulans (strain LMG 21967 / CNCM I-2342 / ORS 2060).